A 717-amino-acid chain; its full sequence is Translation initiation factor eIF2B subunit epsilon (717 aa).

The segment covering 1 to 14 (MAATAAVPGAAAGR) has biased composition (low complexity). Positions 1 to 37 (MAATAAVPGAAAGRASKRGGGGSGGGGTQGAEEEPPP) are disordered. Residue Arg18 is modified to Omega-N-methylarginine. The segment covering 18–29 (RGGGGSGGGGTQ) has biased composition (gly residues). Ser23 is subject to Phosphoserine. Residues Lys57 and Lys99 each participate in a glycyl lysine isopeptide (Lys-Gly) (interchain with G-Cter in ubiquitin) cross-link. A Phosphoserine modification is found at Ser126. Residues Lys137 and Lys213 each participate in a glycyl lysine isopeptide (Lys-Gly) (interchain with G-Cter in ubiquitin) cross-link. Position 318 is a phosphothreonine (Thr318). Residues 442–479 (GSVISLHPPDAEEDEDDGQFSDDSGADQEKEKVKLKGY) form a disordered region. Residues Ser446, Ser462, and Ser465 each carry the phosphoserine modification. The segment covering 452–467 (AEEDEDDGQFSDDSGA) has biased composition (acidic residues). A Glycyl lysine isopeptide (Lys-Gly) (interchain with G-Cter in ubiquitin) cross-link involves residue Lys501. The tract at residues 517-538 (TEEESETESEGSVDPEELDSRA) is disordered. Over residues 519–533 (EESETESEGSVDPEE) the composition is skewed to acidic residues. 2 positions are modified to phosphoserine: Ser528 and Ser536. In terms of domain architecture, W2 spans 539–716 (GSPQLDDIRV…REAEEESSED (178 aa)). Ser540 bears the Phosphoserine; by DYRK2 mark. Ser713 carries the post-translational modification Phosphoserine.

It belongs to the eIF-2B gamma/epsilon subunits family. Component of the translation initiation factor 2B (eIF2B) complex which is a heterodecamer of two sets of five different subunits: alpha, beta, gamma, delta and epsilon. Subunits alpha, beta and delta comprise a regulatory subcomplex and subunits epsilon and gamma comprise a catalytic subcomplex. Within the complex, the hexameric regulatory complex resides at the center, with the two heterodimeric catalytic subcomplexes bound on opposite sides. Post-translationally, phosphorylated at Ser-540 by DYRK2; this is required for subsequent phosphorylation by GSK3B. Phosphorylated on serine and threonine residues by GSK3B; phosphorylation inhibits its function. Polyubiquitinated, probably by NEDD4.

The protein localises to the cytoplasm. Its subcellular location is the cytosol. Its activity is regulated as follows. Activated by the chemical integrated stress response (ISR) inhibitor ISRIB which stimulates guanine nucleotide exchange factor activity for both phosphorylated and unphosphorylated eIF2. In terms of biological role, acts as a component of the translation initiation factor 2B (eIF2B) complex, which catalyzes the exchange of GDP for GTP on eukaryotic initiation factor 2 (eIF2) gamma subunit. Its guanine nucleotide exchange factor activity is repressed when bound to eIF2 complex phosphorylated on the alpha subunit, thereby limiting the amount of methionyl-initiator methionine tRNA available to the ribosome and consequently global translation is repressed. In Mus musculus (Mouse), this protein is Translation initiation factor eIF2B subunit epsilon (Eif2b5).